The sequence spans 473 residues: Levansucrase (473 aa).

A signal peptide spans 1–29 (MNIKKFAKQATVLTFTTALLAGGATQAFA). Residues W85, D86, and S164 each coordinate sucrose. The active-site Nucleophile is D86. Residue D241 participates in Ca(2+) binding. Sucrose contacts are provided by R246 and D247. Residues Q272, L308, N310, and D339 each coordinate Ca(2+). Position 340 (E340) interacts with sucrose. Catalysis depends on E342, which acts as the Proton donor/acceptor. Residue R360 participates in sucrose binding.

The protein belongs to the glycosyl hydrolase 68 family. As to quaternary structure, monomer.

It localises to the secreted. The catalysed reaction is [6)-beta-D-fructofuranosyl-(2-&gt;](n) alpha-D-glucopyranoside + sucrose = [6)-beta-D-fructofuranosyl-(2-&gt;](n+1) alpha-D-glucopyranoside + D-glucose. Ca(2+) may play an important structural role and promote stability of levansucrase. The enzyme concentration is a factor defining the molecular weight (MW) levan distribution. A bimodal distribution is reported at the usual enzyme concentrations. At low concentrations, the enzyme synthesizes high MW levan, and at high concentrations, it synthesizes low MW levan. In terms of biological role, catalyzes the synthesis of levan, a fructose polymer, by transferring the fructosyl moiety from sucrose to a growing acceptor molecule. Also displays sucrose hydrolase activity. At low sucrose concentrations, functions as an hydrolase with water as acceptor, whereas at higher substrate concentrations it adds fructosyl units to a growing levan chain. In Bacillus subtilis (strain 168), this protein is Levansucrase.